A 481-amino-acid polypeptide reads, in one-letter code: UDP-N-acetylmuramate--L-alanine ligase (481 aa).

122-128 is an ATP binding site; sequence GVHGKTT.

It belongs to the MurCDEF family.

The protein localises to the cytoplasm. It catalyses the reaction UDP-N-acetyl-alpha-D-muramate + L-alanine + ATP = UDP-N-acetyl-alpha-D-muramoyl-L-alanine + ADP + phosphate + H(+). It participates in cell wall biogenesis; peptidoglycan biosynthesis. Cell wall formation. The polypeptide is UDP-N-acetylmuramate--L-alanine ligase (Treponema pallidum (strain Nichols)).